The primary structure comprises 317 residues: Putative HTH-type transcriptional regulatory protein Mlab_0160 (317 aa).

Residues 132-189 (LRTLREEQAMSLGDLAHALGVSRRTISKYEGGMGTTLEMAMRLEEFFNDDIVMPIDLL) enclose the HTH cro/C1-type domain. Residues 143–162 (LGDLAHALGVSRRTISKYEG) constitute a DNA-binding region (H-T-H motif). A disordered region spans residues 199–219 (VPASLASGHNPESDAQPKRPE). The segment covering 209 to 219 (PESDAQPKRPE) has biased composition (basic and acidic residues).

This Methanocorpusculum labreanum (strain ATCC 43576 / DSM 4855 / Z) protein is Putative HTH-type transcriptional regulatory protein Mlab_0160.